The chain runs to 152 residues: S-Adenosylmethionine lyase (152 aa).

In terms of assembly, homotetramer. Interacts with host METK; this interaction induces the polymerization of METK into filaments that are enzymatically inactive.

It carries out the reaction S-adenosyl-L-methionine = L-homoserine lactone + S-methyl-5'-thioadenosine. Functionally, degrades the intracellular SAM pools of the host cell and inhibits the host S-adenosylmethionine synthase METK/MAT, thereby preventing methylation of the viral genome. Induces the polymerization of METK into filaments that are enzymatically inactive. Keeping the viral genome in an unmethylated state allows the phage to shift from a lytic infection under normal growth conditions to a transient lysogenic infection under glucose starvation, by blocking its own expression. Does not protect the virus immune against host restriction-modification systems. This chain is S-Adenosylmethionine lyase, found in Escherichia coli (Bacteriophage T3).